A 387-amino-acid chain; its full sequence is Norsolorinic acid reductase stcV (387 aa).

D69 contributes to the NADP(+) binding site. Y74 functions as the Proton donor in the catalytic mechanism. H148 contacts substrate. NADP(+) is bound by residues 178–179 (SD), Q204, 233–243 (GALGRGQYKSA), and 301–309 (RTVEQLEAN).

This sequence belongs to the aldo/keto reductase family. Aldo/keto reductase 2 subfamily.

It functions in the pathway mycotoxin biosynthesis; sterigmatocystin biosynthesis. In terms of biological role, norsolorinic acid reductase; part of the gene cluster that mediates the biosynthesis of sterigmatocystin (ST), a polyketide-derived furanocoumarin which is part of the most toxic and carcinogenic compounds among the known mycotoxins. The first step in the biosynthesis of sterigmatocystin is the production of hexanoate by the fatty acid synthase (FAS) units stcJ and stcK. The polyketide backbone is assembled by the non-reducing polyketide synthase stcA by condensation of the starter hexanoyl-CoA and 7 malonyl-CoA extender units followed by cyclization and release of norsolorinic acid. Norsolorinic acid is the first stable intermediate in the biosynthesis of sterigmatocystin and is converted into averantin (AVN) by the ketoreductase stcE which reduces the hexanoate ketone to an alcohol. Averantin is then oxidized into 5'-hydroxyaverantin (HAVN) by the cytochrome P450 monooxygenase stcF. 5'-hydroxyaverantin is further converted to 5'-oxyaverantin (OAVN) by the 5'-hydroxyaverantin dehydrogenase stcG. The next step is the conversion of OAVN into averufin (AVF) which is catalyzed by a yet to be identified enzyme. The cytochrome P450 monooxygenase stcB and the flavin-binding monooxygenase stcW are both required for the conversion of averufin to 1-hydroxyversicolorone. The esterase stcI probably catalyzes the formation of versiconal hemiacetal acetate from 1-hydroxyversicolorone. The oxydoreductase stcN then probably catalyzes the biosynthetic step from versiconal to versicolorin B (VERB). The next step is performed by the versicolorin B desaturase stcL to produce versicolorin A (VERA). The ketoreductase stcU and the cytochrome P450 monooxygenase stcS are involved in the conversion of versicolorin A to demethylsterigmatocystin. The Baeyer-Villiger oxidas stcQ and the reductase stcR might be involved in the biosynthetic step from versicolorin A to demethylsterigmatocystin. The final step in the biosynthesis of sterigmatocystin is the methylation of demethylsterigmatocystin catalyzed by the methyltransferase stcP. The sequence is that of Norsolorinic acid reductase stcV from Emericella nidulans (strain FGSC A4 / ATCC 38163 / CBS 112.46 / NRRL 194 / M139) (Aspergillus nidulans).